A 118-amino-acid polypeptide reads, in one-letter code: Basic phospholipase A2 nigroxin A (118 aa).

Disulfide bonds link Cys11/Cys70, Cys25/Cys117, Cys27/Cys43, Cys42/Cys98, Cys49/Cys91, Cys59/Cys84, and Cys77/Cys89. Ca(2+) is bound by residues Tyr26, Gly28, and Gly30. His46 is an active-site residue. Asp47 lines the Ca(2+) pocket. Residue Asp92 is part of the active site.

Belongs to the phospholipase A2 family. Group I subfamily. D49 sub-subfamily. The cofactor is Ca(2+). As to expression, expressed by the venom gland.

The protein localises to the secreted. The catalysed reaction is a 1,2-diacyl-sn-glycero-3-phosphocholine + H2O = a 1-acyl-sn-glycero-3-phosphocholine + a fatty acid + H(+). In terms of biological role, snake venom phospholipase A2 (PLA2) that has only a weak enzymatic activity. It has a myotoxic activity in vivo (dystrophic effect). PLA2 catalyzes the calcium-dependent hydrolysis of the 2-acyl groups in 3-sn-phosphoglycerides. This is Basic phospholipase A2 nigroxin A from Micrurus nigrocinctus (Central American coral snake).